The sequence spans 267 residues: Putative phosphoenolpyruvate synthase regulatory protein (267 aa).

147–154 (GVSRSGKT) contacts ADP.

The protein belongs to the pyruvate, phosphate/water dikinase regulatory protein family. PSRP subfamily.

The catalysed reaction is [pyruvate, water dikinase] + ADP = [pyruvate, water dikinase]-phosphate + AMP + H(+). It catalyses the reaction [pyruvate, water dikinase]-phosphate + phosphate + H(+) = [pyruvate, water dikinase] + diphosphate. Bifunctional serine/threonine kinase and phosphorylase involved in the regulation of the phosphoenolpyruvate synthase (PEPS) by catalyzing its phosphorylation/dephosphorylation. The polypeptide is Putative phosphoenolpyruvate synthase regulatory protein (Cupriavidus necator (strain ATCC 17699 / DSM 428 / KCTC 22496 / NCIMB 10442 / H16 / Stanier 337) (Ralstonia eutropha)).